An 869-amino-acid polypeptide reads, in one-letter code: Histone deacetylase 4 (869 aa).

Disordered stretches follow at residues 1 to 25, 128 to 167, and 180 to 218; these read MEEA…PSTS, SSSN…TISQ, and RSKG…QVNV. A compositionally biased stretch (polar residues) spans 184–202; that stretch reads ESNSQSNLMSNSVTANGNG. Serine 251 is subject to Phosphoserine. Residues 460 to 802 form a histone deacetylase region; the sequence is CTTGLGYDQA…VQALIGESDD (343 aa). The active site involves histidine 608.

It belongs to the histone deacetylase family. HD type 2 subfamily. As to quaternary structure, interacts with mef-2. Phosphorylated by serine/threonine-protein kinase kin-29 at Ser-251; the phosphorylation inhibits repression of transcription by mef-2. May be phosphorylated by either cyclic-AMP dependent or cyclic-GMP dependent protein kinases. Expressed in body-wall muscle cells, hypodermal seam cells and neuronal cells including sensory amphid neuronal processes, the nerve ring, ventral nerve cords and motor neuronal commissures.

Its subcellular location is the nucleus. It catalyses the reaction N(6)-acetyl-L-lysyl-[histone] + H2O = L-lysyl-[histone] + acetate. In terms of biological role, responsible for the deacetylation of lysine residues on the N-terminal part of the core histones (H2A, H2B, H3 and H4). Histone deacetylation gives a tag for epigenetic repression and plays an important role in transcriptional regulation, cell cycle progression and developmental events. Histone deacetylases act via the formation of large multiprotein complexes. Involved in transduction of sensory signals, together with egl-4, kin-29 and mef-2; binding to transcription factor mef-2 enables negative modulation of chemoreceptor gene expression in chemosensory neurons. May be involved in muscle development. The sequence is that of Histone deacetylase 4 (hda-4) from Caenorhabditis elegans.